A 476-amino-acid polypeptide reads, in one-letter code: BTB/POZ domain-containing protein KCTD8 (476 aa).

The BTB domain maps to 44 to 122 (EVVELNVGGQ…LRDKQLALPE (79 aa)). Ser-78 carries the phosphoserine modification. Arg-80 is subject to Omega-N-methylarginine. Residues 331–412 (SPKQEHEDRK…WMPPPDKRRN (82 aa)) form a disordered region. Over residues 333–349 (KQEHEDRKRDKVTDKGS) the composition is skewed to basic and acidic residues. A compositionally biased stretch (polar residues) spans 350-391 (ESGTSCNELSTSSCDSHSEASTPQDNPANTQQAAAHQPNTLT). A Phosphoserine modification is found at Ser-413.

Interacts as a tetramer with GABBR1 and GABBR2.

Its subcellular location is the presynaptic cell membrane. It is found in the postsynaptic cell membrane. Its function is as follows. Auxiliary subunit of GABA-B receptors that determine the pharmacology and kinetics of the receptor response. Increases agonist potency and markedly alter the G-protein signaling of the receptors by accelerating onset and promoting desensitization. The polypeptide is BTB/POZ domain-containing protein KCTD8 (Kctd8) (Mus musculus (Mouse)).